The following is a 324-amino-acid chain: MKGIDIYSGQGSVDFNAVKESGVEVVYIKATEGLTYTDSTYKDFYDGAKNAGLKIGFYHYLRANDPTSEAEHFFNTISGLSLDCKCAIDVEVTLGQSIDQISSNVRKFADYLINKGLDVCVYTYTNFYKDNLNSTVKDLPLWIAEYGVSKPNIDASYVGFQYSDSGSVNGISGSADLDEFSEGILVGGTVVIDPGQGGDDNIKAIQQDLNILLKRGLEVDGIEGPETEAAIKDFQSIMGLTVDGIWGTNTSGAAQQIFSRPLDGVAYPHYEYATRYIQYRVGASVDGTFGSGTKAKVAAWQSNQGLMADGVVGSATWSKLLDEN.

Catalysis depends on residues aspartate 5 and glutamate 91. A run of 5 repeats spans residues 212–234, 235–254, 255–277, 278–300, and 301–324. The interval 212 to 324 is 5 X 23 AA tandem repeats; the sequence is LLKRGLEVDG…ATWSKLLDEN (113 aa).

The protein belongs to the glycosyl hydrolase 25 family. Monomer.

The protein localises to the secreted. It localises to the cytoplasm. It catalyses the reaction Hydrolysis of (1-&gt;4)-beta-linkages between N-acetylmuramic acid and N-acetyl-D-glucosamine residues in a peptidoglycan and between N-acetyl-D-glucosamine residues in chitodextrins.. The polypeptide is Autolytic lysozyme (lyc) (Clostridium acetobutylicum (strain ATCC 824 / DSM 792 / JCM 1419 / IAM 19013 / LMG 5710 / NBRC 13948 / NRRL B-527 / VKM B-1787 / 2291 / W)).